Consider the following 233-residue polypeptide: UPF0758 protein RoseRS_0767 (233 aa).

The MPN domain occupies 107–229; that stretch reads LIRSPTDAAQ…FVSMRERGLG (123 aa). His178, His180, and Asp191 together coordinate Zn(2+). A JAMM motif motif is present at residues 178–191; sequence HNHPSGDPTPSPED.

It belongs to the UPF0758 family.

The protein is UPF0758 protein RoseRS_0767 of Roseiflexus sp. (strain RS-1).